Reading from the N-terminus, the 529-residue chain is Cytochrome P450 monooxygenase atmQ (529 aa).

Helical transmembrane passes span tyrosine 22–alanine 42 and serine 51–phenylalanine 71. Cysteine 467 provides a ligand contact to heme.

It belongs to the cytochrome P450 family. Heme is required as a cofactor.

Its subcellular location is the membrane. Its pathway is secondary metabolite biosynthesis. Its function is as follows. Cytochrome P450 monooxygenase; part of the ATM2 gene cluster that mediates the biosynthesis of aflatrem, a tremorgenic mycotoxin with acute neurotoxic effects. Synthesis of geranylgeranyl diphosphate (GGPP) by AtmG (a GGPP synthase) precedes condensation of GGPP with indole 3-glycerol phosphate, followed by epoxidation and cyclization by AtmM (a FAD-dependent monooxygenase) and AtmC (a prenyltransferase) to produce paspaline. AtmB is also essential for paspaline production, but its exact role has not been identified yet. AtmP, a cytochrome P450 monooxygenase, subsequently converts paspaline to 13-desoxypaxilline via PC-M6 by removal of the C-30 methyl group and oxidation at C-10. AtmQ, a cytochrome P450 monooxygenase, then catalyzes the oxidation of 13-desoxypaxilline, first at C-7 to produce paspalicine and then at C-13 to form paspalinine. Finally, AtmD prenylates paspalinine to form aflatrem. The sequence is that of Cytochrome P450 monooxygenase atmQ from Aspergillus flavus.